The chain runs to 76 residues: Sec-independent protein translocase protein TatA (76 aa).

A helical transmembrane segment spans residues 1-21 (MGGISITQLLIIVAIVVLLFG). A disordered region spans residues 45-76 (DDNKEKDAEFKSLSDDSETTAKTEKAKDKEQA).

It belongs to the TatA/E family. The Tat system comprises two distinct complexes: a TatABC complex, containing multiple copies of TatA, TatB and TatC subunits, and a separate TatA complex, containing only TatA subunits. Substrates initially bind to the TatABC complex, which probably triggers association of the separate TatA complex to form the active translocon.

The protein resides in the cell inner membrane. Part of the twin-arginine translocation (Tat) system that transports large folded proteins containing a characteristic twin-arginine motif in their signal peptide across membranes. TatA could form the protein-conducting channel of the Tat system. The protein is Sec-independent protein translocase protein TatA of Pasteurella multocida (strain Pm70).